The primary structure comprises 437 residues: Lipopolysaccharide biosynthesis protein RfbH (437 aa).

The protein belongs to the DegT/DnrJ/EryC1 family. It depends on pyridoxal 5'-phosphate as a cofactor.

It participates in bacterial outer membrane biogenesis; LPS O-antigen biosynthesis. The polypeptide is Lipopolysaccharide biosynthesis protein RfbH (rfbH) (Salmonella typhimurium (strain LT2 / SGSC1412 / ATCC 700720)).